Consider the following 435-residue polypeptide: UPF0053 protein Rv2366c (435 aa).

Residues 1–185 enclose the CNNM transmembrane domain; that stretch reads MTGYYQLLGS…QQRGVVAADE (185 aa). The next 2 membrane-spanning stretches (helical) occupy residues 7–27 and 89–109; these read LLGS…DAAI and VWGL…VVGV. CBS domains are found at residues 204–267 and 272–329; these read MVPR…GRET and VMRP…IADE.

The protein belongs to the UPF0053 family.

Its subcellular location is the cell membrane. The protein is UPF0053 protein Rv2366c of Mycobacterium tuberculosis (strain ATCC 25618 / H37Rv).